We begin with the raw amino-acid sequence, 121 residues long: Non-structural protein 8 (121 aa).

A signal peptide spans 1-15 (MKLLIVFGLLTSVYC). The SARS ORF8 Ig-like domain maps to 19–121 (ECSIQECCEN…HDVRVVLDFI (103 aa)). 3 disulfides stabilise this stretch: cysteine 25–cysteine 90, cysteine 37–cysteine 102, and cysteine 61–cysteine 83.

The chain is Non-structural protein 8 from Rhinolophus macrotis (Big-eared horseshoe bat).